We begin with the raw amino-acid sequence, 360 residues long: Phospho-N-acetylmuramoyl-pentapeptide-transferase (360 aa).

The next 10 membrane-spanning stretches (helical) occupy residues 21-41, 73-93, 94-114, 132-152, 168-188, 199-219, 239-259, 263-283, 288-308, and 338-358; these read YITV…LWIG, TMGG…WANL, ANSY…IGFV, WKYF…YWLG, IMPQ…VGTG, GLAI…AWAT, VVVF…FNTY, VFMG…VAIL, FLLV…ILQV, and VIIR…VTLK.

This sequence belongs to the glycosyltransferase 4 family. MraY subfamily. Mg(2+) is required as a cofactor.

It is found in the cell inner membrane. The catalysed reaction is UDP-N-acetyl-alpha-D-muramoyl-L-alanyl-gamma-D-glutamyl-meso-2,6-diaminopimeloyl-D-alanyl-D-alanine + di-trans,octa-cis-undecaprenyl phosphate = di-trans,octa-cis-undecaprenyl diphospho-N-acetyl-alpha-D-muramoyl-L-alanyl-D-glutamyl-meso-2,6-diaminopimeloyl-D-alanyl-D-alanine + UMP. It participates in cell wall biogenesis; peptidoglycan biosynthesis. Its function is as follows. Catalyzes the initial step of the lipid cycle reactions in the biosynthesis of the cell wall peptidoglycan: transfers peptidoglycan precursor phospho-MurNAc-pentapeptide from UDP-MurNAc-pentapeptide onto the lipid carrier undecaprenyl phosphate, yielding undecaprenyl-pyrophosphoryl-MurNAc-pentapeptide, known as lipid I. The chain is Phospho-N-acetylmuramoyl-pentapeptide-transferase from Haemophilus influenzae (strain 86-028NP).